The sequence spans 439 residues: Beta-conglycinin beta subunit 1 (439 aa).

The first 23 residues, 1-23 (MMRVRFPLLVLLGTVFLASVCVS), serve as a signal peptide directing secretion. Cupin type-1 domains follow at residues 34 to 193 (FYLR…EEIN) and 240 to 401 (FNLR…QDVE). Asn351 carries N-linked (GlcNAc...) asparagine glycosylation. The segment at 411 to 439 (YFVDAQPQQKEEGSKGRKGPFPSILGALY) is disordered. Residues 430 to 439 (PFPSILGALY) form a necessary for sorting to protein storage vacuole region.

Belongs to the 7S seed storage protein family. The alpha-, alpha'-, and beta-subunits associate in various combinations to form trimeric proteins. In terms of processing, the N-linked glycans are not essential for the folding and assembly into trimers. In terms of tissue distribution, expressed in seeds. Not detected in cotyledons or in mature plants.

The protein resides in the vacuole. It localises to the aleurone grain. It is found in the endoplasmic reticulum. The protein localises to the protein storage vacuole. In terms of biological role, seed storage protein. Accumulates during seed development and is hydrolyzed after germination to provide a carbon and nitrogen source for the developing seedling. This is Beta-conglycinin beta subunit 1 from Glycine max (Soybean).